Here is a 134-residue protein sequence, read N- to C-terminus: Fluoride-specific ion channel FluC 2 (134 aa).

4 helical membrane-spanning segments follow: residues L10–L30, L43–P63, L67–A87, and F100–L120. Na(+) is bound by residues G75 and T78.

The protein belongs to the fluoride channel Fluc/FEX (TC 1.A.43) family.

It is found in the cell inner membrane. It carries out the reaction fluoride(in) = fluoride(out). Its activity is regulated as follows. Na(+) is not transported, but it plays an essential structural role and its presence is essential for fluoride channel function. Functionally, fluoride-specific ion channel. Important for reducing fluoride concentration in the cell, thus reducing its toxicity. This is Fluoride-specific ion channel FluC 2 from Synechococcus sp. (strain CC9902).